We begin with the raw amino-acid sequence, 101 residues long: MAKTSMKAREAKRAQLVAKYAEKRLALKAIISSPATSEEDRWDAVLKLQALPRDSSAARQRNRCNQTGRPHGFLRKFGLSRIKLREATMRGEVPGLRKASW.

It belongs to the universal ribosomal protein uS14 family. Part of the 30S ribosomal subunit. Contacts proteins S3 and S10.

Its function is as follows. Binds 16S rRNA, required for the assembly of 30S particles and may also be responsible for determining the conformation of the 16S rRNA at the A site. The chain is Small ribosomal subunit protein uS14 from Shewanella frigidimarina (strain NCIMB 400).